The following is a 274-amino-acid chain: Transmembrane protein 106B (274 aa).

Residues Met-1–His-11 are compositionally biased toward low complexity. Residues Met-1–Gly-20 are disordered. A lipid anchor (N-myristoyl glycine) is attached at Gly-2. The Cytoplasmic portion of the chain corresponds to Gly-2–Leu-96. The residue at position 33 (Ser-33) is a Phosphoserine. Residues Tyr-97–Phe-117 traverse the membrane as a helical segment. The Lumenal segment spans residues Pro-118–Gln-274. Residues Asn-145, Asn-151, Asn-164, and Asn-183 are each glycosylated (N-linked (GlcNAc...) asparagine). Cys-214 and Cys-253 are oxidised to a cystine. Asn-256 carries an N-linked (GlcNAc...) asparagine glycan.

Belongs to the TMEM106 family. As to quaternary structure, can form homomers. Interacts (via N-terminus) with MAP6 (via C-terminus). Interacts (via C-terminus) with the vacuolar-type ATPase subunit ATP6AP1. Interacts (via N-terminus) with AP2M1 and CLTC. Interacts with TMEM106C. (Microbial infection) Interacts with SARS coronavirus-2/SARS-CoV-2 spike protein (via RBD domain). As to expression, expressed in the brain, including in the frontal cortex (at protein level). Expressed in lung epithelial cells.

It localises to the late endosome membrane. It is found in the lysosome membrane. The protein localises to the cell membrane. In neurons, involved in the transport of late endosomes/lysosomes. May be involved in dendrite morphogenesis and maintenance by regulating lysosomal trafficking. May act as a molecular brake for retrograde transport of late endosomes/lysosomes, possibly via its interaction with MAP6. In motoneurons, may mediate the axonal transport of lysosomes and axonal sorting at the initial segment. It remains unclear whether TMEM106B affects the transport of moving lysosomes in the anterograde or retrograde direction in neurites and whether it is important in the sorting of lysosomes in axons or in dendrites. In neurons, may also play a role in the regulation of lysosomal size and responsiveness to stress. Required for proper lysosomal acidification. Functionally, (Microbial infection) Plays a role in human coronavirus SARS-CoV-2 infection, but not in common cold coronaviruses HCoV-229E and HCoV-OC43 infections. Involved in ACE2-independent SARS-CoV-2 cell entry. Required for post-endocytic stage of virus entry, facilitates spike-mediated membrane fusion. Virus attachment and endocytosis can also be mediated by other cell surface receptors. The protein is Transmembrane protein 106B of Homo sapiens (Human).